The sequence spans 247 residues: Killer cell lectin-like receptor subfamily I member 2 (247 aa).

The span at 1–12 (MPRKKQNERGTN) shows a compositional bias: basic and acidic residues. The interval 1–39 (MPRKKQNERGTNKQEIINIETKSSTFQEKQRQSKTDQIS) is disordered. The Cytoplasmic portion of the chain corresponds to 1–79 (MPRKKQNERG…GTDPWLTTWR (79 aa)). Residues 80–100 (IITVILGTSCIILVTKVGFLI) traverse the membrane as a helical segment. Topologically, residues 101–247 (PNLFSRGEKR…KAYTCEFNLQ (147 aa)) are extracellular. N-linked (GlcNAc...) asparagine glycosylation is found at Asn125, Asn196, Asn212, and Asn218. The C-type lectin domain occupies 139 to 243 (FGNNFYLFFR…CSSKKAYTCE (105 aa)). Disulfide bonds link Cys160–Cys242 and Cys221–Cys234.

In terms of assembly, heterodimer with KLRE1. Expressed in natural killer (NK) cells.

The protein localises to the cell membrane. Functionally, lectin-like receptor for natural killer (NK) cells. Heterodimer formation with KLRE1 mediates NK cell cytolytic activity. This Rattus norvegicus (Rat) protein is Killer cell lectin-like receptor subfamily I member 2.